Here is a 376-residue protein sequence, read N- to C-terminus: Chaperone protein DnaJ (376 aa).

Residues 5–70 form the J domain; it reads DYYEVLGVGR…DKKAAYDQFG (66 aa). The segment at 132-210 adopts a CR-type zinc-finger fold; sequence GLTKELRIPT…CHGEGRVEKS (79 aa). Cysteine 145, cysteine 148, cysteine 162, cysteine 165, cysteine 184, cysteine 187, cysteine 198, and cysteine 201 together coordinate Zn(2+). CXXCXGXG motif repeat units follow at residues 145-152, 162-169, 184-191, and 198-205; these read CDLCDGSG, CGTCHGQG, CPTCHGRG, and CGKCHGEG.

Belongs to the DnaJ family. Homodimer. Requires Zn(2+) as cofactor.

The protein localises to the cytoplasm. Participates actively in the response to hyperosmotic and heat shock by preventing the aggregation of stress-denatured proteins and by disaggregating proteins, also in an autonomous, DnaK-independent fashion. Unfolded proteins bind initially to DnaJ; upon interaction with the DnaJ-bound protein, DnaK hydrolyzes its bound ATP, resulting in the formation of a stable complex. GrpE releases ADP from DnaK; ATP binding to DnaK triggers the release of the substrate protein, thus completing the reaction cycle. Several rounds of ATP-dependent interactions between DnaJ, DnaK and GrpE are required for fully efficient folding. Also involved, together with DnaK and GrpE, in the DNA replication of plasmids through activation of initiation proteins. The protein is Chaperone protein DnaJ of Shewanella frigidimarina (strain NCIMB 400).